Consider the following 264-residue polypeptide: Thiazole synthase (264 aa).

The active-site Schiff-base intermediate with DXP is K106. Residues G167, 193-194, and 215-216 each bind 1-deoxy-D-xylulose 5-phosphate; these read AG and NT.

The protein belongs to the ThiG family. In terms of assembly, homotetramer. Forms heterodimers with either ThiH or ThiS.

Its subcellular location is the cytoplasm. The catalysed reaction is [ThiS sulfur-carrier protein]-C-terminal-Gly-aminoethanethioate + 2-iminoacetate + 1-deoxy-D-xylulose 5-phosphate = [ThiS sulfur-carrier protein]-C-terminal Gly-Gly + 2-[(2R,5Z)-2-carboxy-4-methylthiazol-5(2H)-ylidene]ethyl phosphate + 2 H2O + H(+). It functions in the pathway cofactor biosynthesis; thiamine diphosphate biosynthesis. Functionally, catalyzes the rearrangement of 1-deoxy-D-xylulose 5-phosphate (DXP) to produce the thiazole phosphate moiety of thiamine. Sulfur is provided by the thiocarboxylate moiety of the carrier protein ThiS. In vitro, sulfur can be provided by H(2)S. The sequence is that of Thiazole synthase from Xanthomonas euvesicatoria pv. vesicatoria (strain 85-10) (Xanthomonas campestris pv. vesicatoria).